The following is a 262-amino-acid chain: Sulfur carrier protein FdhD (262 aa).

The active-site Cysteine persulfide intermediate is the Cys107.

It belongs to the FdhD family.

It localises to the cytoplasm. Required for formate dehydrogenase (FDH) activity. Acts as a sulfur carrier protein that transfers sulfur from IscS to the molybdenum cofactor prior to its insertion into FDH. The protein is Sulfur carrier protein FdhD of Bacillus pumilus (strain SAFR-032).